The following is a 296-amino-acid chain: SPbeta prophage-derived endonuclease YokF (296 aa).

The signal sequence occupies residues 1 to 19 (MKKVLLGFAAFTLSLSLAA). Cysteine 20 carries N-palmitoyl cysteine lipidation. Cysteine 20 carries the S-diacylglycerol cysteine lipid modification. Positions 20 to 65 (CSSNDSEKVSTEKETPQASTDVEKKTEQKESTKEKTADKSKEKDKK) are disordered. Residues 24–65 (DSEKVSTEKETPQASTDVEKKTEQKESTKEKTADKSKEKDKK) show a composition bias toward basic and acidic residues. The region spanning 66-199 (ELVDVTLDRA…KSEKLSIWSK (134 aa)) is the TNase-like domain. Residue aspartate 79 participates in Ca(2+) binding. Residue arginine 93 is part of the active site. Ca(2+)-binding residues include aspartate 98 and threonine 99. Residues glutamate 101 and arginine 144 contribute to the active site. The tract at residues 218–296 (AVKKATTSKP…RDHDNYACER (79 aa)) is disordered. The segment covering 219 to 244 (VKKATTSKPAATQPTTPKASSETSTT) has biased composition (low complexity). Positions 284 to 296 (KMDRDHDNYACER) are enriched in basic and acidic residues.

Ca(2+) is required as a cofactor. The cofactor is Cu(2+). It depends on Mn(2+) as a cofactor.

It localises to the cell membrane. With respect to regulation, inhibited by aurintricalboxylic acid but not by Zn(2+), Mn(2+), Hg(2+), 2-mercaptoethanol and sodium citrate. Neither inhibited nor activated by ATP. Its function is as follows. Catalyzes the hydrolysis of supercoiled double and single strand DNA and RNA. Involved in chromosomal DNA degradation and cell death caused by thermal stress. This chain is SPbeta prophage-derived endonuclease YokF (yokF), found in Bacillus subtilis (strain 168).